Here is a 247-residue protein sequence, read N- to C-terminus: Probable transcriptional regulatory protein PMT_1423 (247 aa).

The protein belongs to the TACO1 family.

Its subcellular location is the cytoplasm. In Prochlorococcus marinus (strain MIT 9313), this protein is Probable transcriptional regulatory protein PMT_1423.